The following is a 289-amino-acid chain: MNGVINVYKPQNITSFDVVRIIKKISRIKKVGHTGTLDPMATGVLPICLGGSTKIVDFIMNEHKEYRAKLKLGLITDTYDREGKVLKEEDASKILEEEVVNCINSFKGEIIQIPPMYSAIKIKGERLYNLARKGIEVEREGRKINIYNIEVLKVNLPYVEFKVNCSKGTYIRSLCYDIGNKLGMGATMWELERTKTGNFSIENSINLEDINEENIQEFIIPAEKALSKYERIEIDEYFSRLLKNGVKVKDKRLLDKIKANDILRVYQEDKFIGLGQKTKEGFKIVKLLV.

The active-site Nucleophile is the aspartate 38.

The protein belongs to the pseudouridine synthase TruB family. Type 1 subfamily.

It catalyses the reaction uridine(55) in tRNA = pseudouridine(55) in tRNA. Functionally, responsible for synthesis of pseudouridine from uracil-55 in the psi GC loop of transfer RNAs. In Clostridium tetani (strain Massachusetts / E88), this protein is tRNA pseudouridine synthase B.